The chain runs to 298 residues: Inosose dehydratase (298 aa).

It belongs to the IolE/MocC family. Requires glutathione as cofactor. It depends on Co(2+) as a cofactor. Mn(2+) is required as a cofactor.

The catalysed reaction is scyllo-inosose = 3D-3,5/4-trihydroxycyclohexane-1,2-dione + H2O. It functions in the pathway polyol metabolism; myo-inositol degradation into acetyl-CoA; acetyl-CoA from myo-inositol: step 2/7. Catalyzes the dehydration of inosose (2-keto-myo-inositol, 2KMI or 2,4,6/3,5-pentahydroxycyclohexanone) to 3D-(3,5/4)-trihydroxycyclohexane-1,2-dione (D-2,3-diketo-4-deoxy-epi-inositol). The protein is Inosose dehydratase of Bacillus anthracis (strain CDC 684 / NRRL 3495).